Reading from the N-terminus, the 287-residue chain is Mitochondrial glycine transporter A (287 aa).

Solcar repeat units follow at residues 7–97, 104–188, and 198–282; these read HPAV…LKQR, PGPL…TKHL, and YAPV…LMAQ. 6 helical membrane passes run 13-38, 72-98, 110-135, 163-186, 202-228, and 257-275; these read FMCGSLSGTCSTLLFQPLDLVKTRLQ, GVSPSFVRCIPGVGIYFSTYFTLKQRY, VLLGAGARCVAGVFMLPVTVIKTRFE, GLMATLLRDAPFSGIYVMIYSQTK, ANFSCGVLAGVLASVLTQPADVVKTHI, and GAVPRSLRRTMMAAMAWTV.

It belongs to the mitochondrial carrier (TC 2.A.29) family. SLC25A38 subfamily. At 24 hours post-fertilization, expressed predominantly in posterior blood island, posterior cardinal vein and circulating blood, as well as in somites, brain and retina. At 34 hours post-fertilization, becomes restricted to posterior blood island and circulating blood.

The protein localises to the mitochondrion inner membrane. The enzyme catalyses glycine(in) = glycine(out). In terms of biological role, mitochondrial glycine transporter that imports glycine into the mitochondrial matrix. Plays an important role in providing glycine for the first enzymatic step in heme biosynthesis, the condensation of glycine with succinyl-CoA to produce 5-aminolevulinate (ALA) in the mitochondrial matrix. Required during erythropoiesis. May play a role as pro-apoptotic protein that induces caspase-dependent apoptosis. This is Mitochondrial glycine transporter A (slc25a38a) from Danio rerio (Zebrafish).